We begin with the raw amino-acid sequence, 136 residues long: ATP synthase epsilon chain (136 aa).

This sequence belongs to the ATPase epsilon chain family. As to quaternary structure, F-type ATPases have 2 components, CF(1) - the catalytic core - and CF(0) - the membrane proton channel. CF(1) has five subunits: alpha(3), beta(3), gamma(1), delta(1), epsilon(1). CF(0) has three main subunits: a, b and c.

The protein localises to the cell membrane. Functionally, produces ATP from ADP in the presence of a proton gradient across the membrane. The polypeptide is ATP synthase epsilon chain (Herpetosiphon aurantiacus (strain ATCC 23779 / DSM 785 / 114-95)).